We begin with the raw amino-acid sequence, 760 residues long: Phosphoribosylformylglycinamidine synthase subunit PurL (760 aa).

The tract at residues Met-1–Gln-25 is disordered. His-69 is a catalytic residue. Positions 72 and 115 each coordinate ATP. Glu-117 is a binding site for Mg(2+). Substrate contacts are provided by residues Ser-118–His-121 and Arg-140. His-119 (proton acceptor) is an active-site residue. Asp-141 is a Mg(2+) binding site. Gln-265 is a substrate binding site. Asp-293 is a Mg(2+) binding site. Glu-337–Gln-339 contacts substrate. ATP contacts are provided by Asn-519 and Gly-556. Asn-557 contributes to the Mg(2+) binding site. Ser-559 lines the substrate pocket.

The protein belongs to the FGAMS family. In terms of assembly, monomer. Part of the FGAM synthase complex composed of 1 PurL, 1 PurQ and 2 PurS subunits.

It localises to the cytoplasm. It catalyses the reaction N(2)-formyl-N(1)-(5-phospho-beta-D-ribosyl)glycinamide + L-glutamine + ATP + H2O = 2-formamido-N(1)-(5-O-phospho-beta-D-ribosyl)acetamidine + L-glutamate + ADP + phosphate + H(+). The protein operates within purine metabolism; IMP biosynthesis via de novo pathway; 5-amino-1-(5-phospho-D-ribosyl)imidazole from N(2)-formyl-N(1)-(5-phospho-D-ribosyl)glycinamide: step 1/2. Functionally, part of the phosphoribosylformylglycinamidine synthase complex involved in the purines biosynthetic pathway. Catalyzes the ATP-dependent conversion of formylglycinamide ribonucleotide (FGAR) and glutamine to yield formylglycinamidine ribonucleotide (FGAM) and glutamate. The FGAM synthase complex is composed of three subunits. PurQ produces an ammonia molecule by converting glutamine to glutamate. PurL transfers the ammonia molecule to FGAR to form FGAM in an ATP-dependent manner. PurS interacts with PurQ and PurL and is thought to assist in the transfer of the ammonia molecule from PurQ to PurL. The protein is Phosphoribosylformylglycinamidine synthase subunit PurL of Tropheryma whipplei (strain TW08/27) (Whipple's bacillus).